The chain runs to 119 residues: Cytochrome c55X (119 aa).

An N-terminal signal peptide occupies residues 1–20 (MNAPPDFRRAASHALWLALA). Heme c is bound by residues cysteine 51, cysteine 54, and histidine 55.

Post-translationally, binds 1 heme c group covalently per subunit.

The protein localises to the periplasm. Monoheme c-type cytochrome. The protein is Cytochrome c55X (nirC) of Pseudomonas aeruginosa (strain ATCC 15692 / DSM 22644 / CIP 104116 / JCM 14847 / LMG 12228 / 1C / PRS 101 / PAO1).